The chain runs to 361 residues: Phospho-N-acetylmuramoyl-pentapeptide-transferase (361 aa).

Helical transmembrane passes span 25-45 (RAVL…PWVI), 73-93 (TMGG…WADL), 97-117 (YVWL…YDDW), 134-154 (MFWQ…TASL), 168-188 (VIYP…IVGT), 200-220 (GLAA…AYVA), 240-260 (VAVF…FNAY), 264-284 (VFMG…VAVI), 289-309 (IVLF…MIQV), and 338-358 (QVVV…LSTL).

The protein belongs to the glycosyltransferase 4 family. MraY subfamily. Requires Mg(2+) as cofactor.

The protein resides in the cell inner membrane. The catalysed reaction is UDP-N-acetyl-alpha-D-muramoyl-L-alanyl-gamma-D-glutamyl-meso-2,6-diaminopimeloyl-D-alanyl-D-alanine + di-trans,octa-cis-undecaprenyl phosphate = di-trans,octa-cis-undecaprenyl diphospho-N-acetyl-alpha-D-muramoyl-L-alanyl-D-glutamyl-meso-2,6-diaminopimeloyl-D-alanyl-D-alanine + UMP. It participates in cell wall biogenesis; peptidoglycan biosynthesis. Its function is as follows. Catalyzes the initial step of the lipid cycle reactions in the biosynthesis of the cell wall peptidoglycan: transfers peptidoglycan precursor phospho-MurNAc-pentapeptide from UDP-MurNAc-pentapeptide onto the lipid carrier undecaprenyl phosphate, yielding undecaprenyl-pyrophosphoryl-MurNAc-pentapeptide, known as lipid I. The polypeptide is Phospho-N-acetylmuramoyl-pentapeptide-transferase (Laribacter hongkongensis (strain HLHK9)).